The following is a 323-amino-acid chain: RNA polymerase sigma factor SigB (323 aa).

The segment at 1-228 is sufficient to interact with RbpA; sequence MADAPTRATT…DMPVGSEEEA (228 aa). A sigma-70 factor domain-1 region spans residues 25–59; it reads DLVRVYLNGIGKTALLNAAGEVELAKRIEAGLYAE. The interval 90–160 is sigma-70 factor domain-2; sequence LLEANLRLVV…TRGMADQSRT (71 aa). The Polymerase core binding signature appears at 114–117; sequence DLIQ. The sigma-70 factor domain-3 stretch occupies residues 169–245; that stretch reads EQVNKLARIK…DAEAMSAENA (77 aa). The tract at residues 258-311 is sigma-70 factor domain-4; that stretch reads VLATLDEREHQVIRLRFGLDDGQPRTLDQIGKLFGLSRERVRQIERDVMSKLRH. The H-T-H motif DNA-binding region spans 284–303; it reads LDQIGKLFGLSRERVRQIER.

Belongs to the sigma-70 factor family. In terms of assembly, monomer. Interacts transiently with the RNA polymerase catalytic core formed by RpoA, RpoB, RpoC and RpoZ (2 alpha, 1 beta, 1 beta' and 1 omega subunit) to form the RNA polymerase holoenzyme that can initiate transcription.

In terms of biological role, sigma factors are initiation factors that promote the attachment of RNA polymerase to specific initiation sites and are then released. A non-essential principal sigma factor that responds to cell envelope stress and hypoxia. This chain is RNA polymerase sigma factor SigB (sigB), found in Mycobacterium tuberculosis (strain CDC 1551 / Oshkosh).